Here is a 657-residue protein sequence, read N- to C-terminus: Threonine--tRNA ligase (657 aa).

A TGS domain is found at 7–70 (QQASIAITLP…LCDANIEIVT (64 aa)). The segment at 253 to 555 (DHRKLGTELE…LIEHTAGNFP (303 aa)) is catalytic. Cys351, His402, and His532 together coordinate Zn(2+).

Belongs to the class-II aminoacyl-tRNA synthetase family. As to quaternary structure, homodimer. The cofactor is Zn(2+).

Its subcellular location is the cytoplasm. The catalysed reaction is tRNA(Thr) + L-threonine + ATP = L-threonyl-tRNA(Thr) + AMP + diphosphate + H(+). Functionally, catalyzes the attachment of threonine to tRNA(Thr) in a two-step reaction: L-threonine is first activated by ATP to form Thr-AMP and then transferred to the acceptor end of tRNA(Thr). Also edits incorrectly charged L-seryl-tRNA(Thr). This is Threonine--tRNA ligase from Chlorobium limicola (strain DSM 245 / NBRC 103803 / 6330).